The chain runs to 132 residues: Ragulator complex protein LAMTOR3 homolog (132 aa).

The protein belongs to the LAMTOR3 family. Part of the Ragulator complex.

Functionally, regulator of the TOR pathway, a signaling cascade that promotes cell growth in response to growth factors, energy levels, and amino acids. May activate the TOR signaling cascade in response to amino acids. The polypeptide is Ragulator complex protein LAMTOR3 homolog (Dictyostelium discoideum (Social amoeba)).